The following is a 594-amino-acid chain: (-)-endo-fenchol synthase, chloroplastic (594 aa).

A chloroplast-targeting transit peptide spans 1–50; sequence MSSLVMHVGIVNKPAITYLPTLSRRASNLHNVSSTRLQTSCSLQLDYKPV. Residues Asp-348, Asp-352, Asp-492, and Glu-500 each coordinate Mg(2+). Positions 348 to 352 match the DDXXD motif motif; sequence DDIYD.

This sequence belongs to the terpene synthase family. Tpsa subfamily. Mg(2+) serves as cofactor. Requires Mn(2+) as cofactor. In terms of tissue distribution, expressed at low levels in leaves.

It is found in the plastid. Its subcellular location is the chloroplast. It carries out the reaction (2E)-geranyl diphosphate = alpha-pinene + diphosphate. The catalysed reaction is (2E)-geranyl diphosphate + H2O = (1S,2S,4R)-endo-fenchol + diphosphate. The enzyme catalyses (2E)-geranyl diphosphate = limonene + diphosphate. Its pathway is secondary metabolite biosynthesis; terpenoid biosynthesis. In terms of biological role, monoterpene synthase involved in the biosynthesis of volatile compounds widely used in aromatherapy and folk medicine, and present in culinary herbs. Mediates the conversion of (2E)-geranyl diphosphate (GPP) into alpha fenchol, limonene and alpha-pinene and, as minor compounds, into beta-myrcene, alpha-terpinolene and alpha-phellandrene. This is (-)-endo-fenchol synthase, chloroplastic from Lavandula stoechas (Butterfly lavender).